The primary structure comprises 244 residues: Orotidine 5'-phosphate decarboxylase (244 aa).

Residues D10, K32, 59–68 (DLKLHDIPNT), T122, R184, Q193, G213, and R214 contribute to the substrate site. The active-site Proton donor is K61.

This sequence belongs to the OMP decarboxylase family. Type 1 subfamily. Homodimer.

The enzyme catalyses orotidine 5'-phosphate + H(+) = UMP + CO2. The protein operates within pyrimidine metabolism; UMP biosynthesis via de novo pathway; UMP from orotate: step 2/2. Catalyzes the decarboxylation of orotidine 5'-monophosphate (OMP) to uridine 5'-monophosphate (UMP). The sequence is that of Orotidine 5'-phosphate decarboxylase from Geobacillus kaustophilus (strain HTA426).